Consider the following 382-residue polypeptide: tRNA (guanine-N(7)-)-methyltransferase non-catalytic subunit wuho (382 aa).

Residues 40–59 are disordered; sequence VKDTDAGNEPNGNQTQPTPA. Residues 49 to 59 show a composition bias toward polar residues; it reads PNGNQTQPTPA. WD repeat units lie at residues 149–190 and 192–230; these read GHMS…ECFC and GHTE…ELSK.

Belongs to the WD repeat TRM82 family. Forms a heterodimer with the catalytic subunit.

The protein resides in the nucleus. The protein operates within tRNA modification; N(7)-methylguanine-tRNA biosynthesis. Its function is as follows. Required for the formation of N(7)-methylguanine at position 46 (m7G46) in tRNA. In the complex, it is required to stabilize and induce conformational changes of the catalytic subunit. The protein is tRNA (guanine-N(7)-)-methyltransferase non-catalytic subunit wuho of Anopheles gambiae (African malaria mosquito).